The chain runs to 278 residues: Deoxyuridine 5'-triphosphate nucleotidohydrolase (278 aa).

Substrate-binding positions include 171–173 (RSG) and 273–274 (FG).

This sequence belongs to the dUTPase family. Mg(2+) is required as a cofactor.

It catalyses the reaction dUTP + H2O = dUMP + diphosphate + H(+). Its function is as follows. Involved in nucleotide metabolism: produces dUMP, the immediate precursor of thymidine nucleotides and decreases the intracellular concentration of dUTP to avoid uracil incorporation into viral DNA. The polypeptide is Deoxyuridine 5'-triphosphate nucleotidohydrolase (Homo sapiens (Human)).